Here is a 274-residue protein sequence, read N- to C-terminus: Large ribosomal subunit protein uL2cz/uL2cy (274 aa).

2 disordered regions span residues 1–21 (MAIH…VDSQ) and 224–252 (NPVD…GYPA).

Belongs to the universal ribosomal protein uL2 family. As to quaternary structure, part of the 50S ribosomal subunit.

It localises to the plastid. Its subcellular location is the chloroplast. This chain is Large ribosomal subunit protein uL2cz/uL2cy (rpl2-A), found in Olimarabidopsis pumila (Dwarf rocket).